The chain runs to 467 residues: UDP-N-acetylmuramate--L-alanine ligase (467 aa).

An ATP-binding site is contributed by 114 to 120; sequence GTHGKTT.

It belongs to the MurCDEF family.

Its subcellular location is the cytoplasm. It carries out the reaction UDP-N-acetyl-alpha-D-muramate + L-alanine + ATP = UDP-N-acetyl-alpha-D-muramoyl-L-alanine + ADP + phosphate + H(+). It participates in cell wall biogenesis; peptidoglycan biosynthesis. Cell wall formation. The chain is UDP-N-acetylmuramate--L-alanine ligase from Chlorobium chlorochromatii (strain CaD3).